Here is a 966-residue protein sequence, read N- to C-terminus: uncharacterized protein (966 aa).

An N-terminal signal peptide occupies residues 1–24; sequence MQGNLLKVLGVLAIVATLVCFIFA. 6 helical membrane passes run 601 to 621, 711 to 731, 743 to 763, 785 to 805, 822 to 842, and 855 to 875; these read IKAI…LGFA, LGLS…IVII, AFMA…FLLF, VVMM…LDFV, FIGT…INWF, and GVNM…YGYV. A disordered region spans residues 918–966; sequence TRQGITGRAEARLKQRNKTLDQAEKNRKNTQKEGGEKTNEEPPKPETPK. Residues 926–966 show a composition bias toward basic and acidic residues; it reads AEARLKQRNKTLDQAEKNRKNTQKEGGEKTNEEPPKPETPK.

Belongs to the TrbL/VirB6 family.

The protein resides in the cell membrane. This is an uncharacterized protein from Rickettsia conorii (strain ATCC VR-613 / Malish 7).